A 652-amino-acid polypeptide reads, in one-letter code: Anaphase-promoting complex subunit 4 (652 aa).

In terms of assembly, the APC/C is composed of at least 13 subunits that stay tightly associated throughout the cell cycle: APC1, APC2, APC4, APC5, APC9, APC11, CDC16, CDC23, CDC26, CDC27, DOC1, MND2 and SWM1.

It is found in the cytoplasm. It localises to the nucleus. It participates in protein modification; protein ubiquitination. Functionally, component of the anaphase promoting complex/cyclosome (APC/C), a cell cycle-regulated E3 ubiquitin-protein ligase complex that controls progression through mitosis and the G1 phase of the cell cycle. The APC/C is thought to confer substrate specificity and, in the presence of ubiquitin-conjugating E2 enzymes, it catalyzes the formation of protein-ubiquitin conjugates that are subsequently degraded by the 26S proteasome. In early mitosis, the APC/C is activated by CDC20 and targets securin PDS1, the B-type cyclin CLB5, and other anaphase inhibitory proteins for proteolysis, thereby triggering the separation of sister chromatids at the metaphase-to-anaphase transition. In late mitosis and in G1, degradation of CLB5 allows activation of the APC/C by CDH1, which is needed to destroy CDC20 and the B-type cyclin CLB2 to allow exit from mitosis and creating the low CDK state necessary for cytokinesis and for reforming prereplicative complexes in G1 prior to another round of replication. The polypeptide is Anaphase-promoting complex subunit 4 (APC4) (Saccharomyces cerevisiae (strain ATCC 204508 / S288c) (Baker's yeast)).